Here is a 385-residue protein sequence, read N- to C-terminus: Tyrosine--tRNA ligase 1, cytoplasmic (385 aa).

The 'HIGH' region signature appears at 77 to 85; the sequence is PSGRMHIAQ. L-tyrosine-binding residues include Tyr200, Gln204, Asp207, and Gln222. Residues 259 to 263 carry the 'KMSKS' region motif; the sequence is KMSKS. An ATP-binding site is contributed by Lys262.

The protein belongs to the class-I aminoacyl-tRNA synthetase family.

It localises to the cytoplasm. The protein resides in the cytosol. It carries out the reaction tRNA(Tyr) + L-tyrosine + ATP = L-tyrosyl-tRNA(Tyr) + AMP + diphosphate + H(+). Catalyzes the attachment of tyrosine to tRNA(Tyr) in a two-step reaction: tyrosine is first activated by ATP to form Tyr-AMP and then transferred to the acceptor end of tRNA(Tyr). This is Tyrosine--tRNA ligase 1, cytoplasmic from Arabidopsis thaliana (Mouse-ear cress).